We begin with the raw amino-acid sequence, 184 residues long: Elongation factor P (184 aa).

This sequence belongs to the elongation factor P family.

The protein resides in the cytoplasm. Its pathway is protein biosynthesis; polypeptide chain elongation. Functionally, involved in peptide bond synthesis. Stimulates efficient translation and peptide-bond synthesis on native or reconstituted 70S ribosomes in vitro. Probably functions indirectly by altering the affinity of the ribosome for aminoacyl-tRNA, thus increasing their reactivity as acceptors for peptidyl transferase. The polypeptide is Elongation factor P (Leptothrix cholodnii (strain ATCC 51168 / LMG 8142 / SP-6) (Leptothrix discophora (strain SP-6))).